The chain runs to 547 residues: MAAKEIIFSEKARSRMVYGVNLLANAVKATLGPKGRNVVLDKNFGSPIITKDGVSVAKEIELADKFENMGAQMLKEVASKTNDHAGDGTTTATVLAQALIREGCKAVAAGMNPMDLKRGIDKAVIAAVTELKKISKPTSDDKAIAQVATISANSDESIGNIIAEAMKKVGKEGVITIEEGTTLENELDVVEGMQFDRGYSSPYFINNQQSQIVELDNPYILLHDKKISNVRDLLTVLDAVAKESKQLLIVAEEVEGEALATLVVNNIRGIIKVCAVKAPGFGDRRKAMLEDMAVLTGGTVISEEVGLSLEKATTSHLGKAKKVRVSKENTTIIDGMGDNDAINGRVKQIKTQIEETTSDYDREKLQERVAKLAGGVAVIKVGAATEVEMKEKKARVDDALLATRAAVEEGVIPGGGVALIRVITAISNLKGANEDQTHGIQIALRAMEAPLREIVANAGEEPSVILNKVKEGKGNFGYNAATGEFGDMVNFGILDPTKVTRSALQNAASIAGLMITTEAMIAEAPKKDEPTPPAAGGGMGGMGGMDF.

ATP-binding positions include 30-33, lysine 51, 87-91, glycine 415, 479-481, and aspartate 495; these read TLGP, DGTTT, and NAA. The interval 526–547 is disordered; the sequence is KKDEPTPPAAGGGMGGMGGMDF. Over residues 535–547 the composition is skewed to gly residues; the sequence is AGGGMGGMGGMDF.

The protein belongs to the chaperonin (HSP60) family. Forms a cylinder of 14 subunits composed of two heptameric rings stacked back-to-back. Interacts with the co-chaperonin GroES.

It localises to the cytoplasm. It carries out the reaction ATP + H2O + a folded polypeptide = ADP + phosphate + an unfolded polypeptide.. Together with its co-chaperonin GroES, plays an essential role in assisting protein folding. The GroEL-GroES system forms a nano-cage that allows encapsulation of the non-native substrate proteins and provides a physical environment optimized to promote and accelerate protein folding. This chain is Chaperonin GroEL, found in Xylella fastidiosa (strain M12).